A 113-amino-acid chain; its full sequence is Small ribosomal subunit protein bS18 (113 aa).

Residues 1-41 are disordered; sequence MSEEKIVNTEAAPEAVAERPARAERSERPERPAKGPFGKKR. The segment covering 16 to 33 has biased composition (basic and acidic residues); sequence VAERPARAERSERPERPA.

The protein belongs to the bacterial ribosomal protein bS18 family. In terms of assembly, part of the 30S ribosomal subunit. Forms a tight heterodimer with protein bS6.

Functionally, binds as a heterodimer with protein bS6 to the central domain of the 16S rRNA, where it helps stabilize the platform of the 30S subunit. The sequence is that of Small ribosomal subunit protein bS18 from Elusimicrobium minutum (strain Pei191).